A 361-amino-acid polypeptide reads, in one-letter code: Holliday junction branch migration complex subunit RuvB (361 aa).

The segment covering 1–12 has biased composition (acidic residues); the sequence is MNWDETGPETDE. The segment at 1–21 is disordered; the sequence is MNWDETGPETDEPTGPVLDDR. A large ATPase domain (RuvB-L) region spans residues 13 to 199; that stretch reads PTGPVLDDRL…FGFTGHMEFY (187 aa). Residues L38, R39, G80, K83, T84, T85, 146 to 148, R189, Y199, and R236 contribute to the ATP site; that span reads EDF. T84 is a Mg(2+) binding site. The tract at residues 200-270 is small ATPAse domain (RuvB-S); sequence APAELERVLH…IAMAALKVYE (71 aa). The head domain (RuvB-H) stretch occupies residues 273 to 361; it reads ARGLDRLDRA…AKGQQGLFGA (89 aa). DNA-binding residues include R309, R328, and R333.

It belongs to the RuvB family. In terms of assembly, homohexamer. Forms an RuvA(8)-RuvB(12)-Holliday junction (HJ) complex. HJ DNA is sandwiched between 2 RuvA tetramers; dsDNA enters through RuvA and exits via RuvB. An RuvB hexamer assembles on each DNA strand where it exits the tetramer. Each RuvB hexamer is contacted by two RuvA subunits (via domain III) on 2 adjacent RuvB subunits; this complex drives branch migration. In the full resolvosome a probable DNA-RuvA(4)-RuvB(12)-RuvC(2) complex forms which resolves the HJ.

Its subcellular location is the cytoplasm. The enzyme catalyses ATP + H2O = ADP + phosphate + H(+). Functionally, the RuvA-RuvB-RuvC complex processes Holliday junction (HJ) DNA during genetic recombination and DNA repair, while the RuvA-RuvB complex plays an important role in the rescue of blocked DNA replication forks via replication fork reversal (RFR). RuvA specifically binds to HJ cruciform DNA, conferring on it an open structure. The RuvB hexamer acts as an ATP-dependent pump, pulling dsDNA into and through the RuvAB complex. RuvB forms 2 homohexamers on either side of HJ DNA bound by 1 or 2 RuvA tetramers; 4 subunits per hexamer contact DNA at a time. Coordinated motions by a converter formed by DNA-disengaged RuvB subunits stimulates ATP hydrolysis and nucleotide exchange. Immobilization of the converter enables RuvB to convert the ATP-contained energy into a lever motion, pulling 2 nucleotides of DNA out of the RuvA tetramer per ATP hydrolyzed, thus driving DNA branch migration. The RuvB motors rotate together with the DNA substrate, which together with the progressing nucleotide cycle form the mechanistic basis for DNA recombination by continuous HJ branch migration. Branch migration allows RuvC to scan DNA until it finds its consensus sequence, where it cleaves and resolves cruciform DNA. The chain is Holliday junction branch migration complex subunit RuvB from Streptomyces griseus subsp. griseus (strain JCM 4626 / CBS 651.72 / NBRC 13350 / KCC S-0626 / ISP 5235).